The primary structure comprises 207 residues: Pyridoxine/pyridoxamine 5'-phosphate oxidase (207 aa).

Residues Arg-53–Lys-58, Tyr-68–Thr-69, Lys-75, and Gln-97 each bind FMN. Lys-58 lines the substrate pocket. 3 residues coordinate substrate: Tyr-115, Arg-119, and Ser-123. FMN-binding positions include Gln-132–Ser-133 and Trp-177. Arg-183 to His-185 serves as a coordination point for substrate. FMN is bound at residue Arg-187.

The protein belongs to the pyridoxamine 5'-phosphate oxidase family. In terms of assembly, homodimer. Requires FMN as cofactor.

The catalysed reaction is pyridoxamine 5'-phosphate + O2 + H2O = pyridoxal 5'-phosphate + H2O2 + NH4(+). It carries out the reaction pyridoxine 5'-phosphate + O2 = pyridoxal 5'-phosphate + H2O2. It participates in cofactor metabolism; pyridoxal 5'-phosphate salvage; pyridoxal 5'-phosphate from pyridoxamine 5'-phosphate: step 1/1. Its pathway is cofactor metabolism; pyridoxal 5'-phosphate salvage; pyridoxal 5'-phosphate from pyridoxine 5'-phosphate: step 1/1. Its function is as follows. Catalyzes the oxidation of either pyridoxine 5'-phosphate (PNP) or pyridoxamine 5'-phosphate (PMP) into pyridoxal 5'-phosphate (PLP). The polypeptide is Pyridoxine/pyridoxamine 5'-phosphate oxidase (Bartonella henselae (strain ATCC 49882 / DSM 28221 / CCUG 30454 / Houston 1) (Rochalimaea henselae)).